The primary structure comprises 842 residues: Leucine--tRNA ligase (842 aa).

The 'HIGH' region signature appears at 44–55 (PYPSANGLHVGH). The short motif at 619–623 (KMSKS) is the 'KMSKS' region element. Lys-622 serves as a coordination point for ATP.

It belongs to the class-I aminoacyl-tRNA synthetase family.

It is found in the cytoplasm. It carries out the reaction tRNA(Leu) + L-leucine + ATP = L-leucyl-tRNA(Leu) + AMP + diphosphate. The chain is Leucine--tRNA ligase from Borrelia recurrentis (strain A1).